A 92-amino-acid polypeptide reads, in one-letter code: Small ribosomal subunit protein bS18 (92 aa).

The protein belongs to the bacterial ribosomal protein bS18 family. As to quaternary structure, part of the 30S ribosomal subunit. Forms a tight heterodimer with protein bS6.

Functionally, binds as a heterodimer with protein bS6 to the central domain of the 16S rRNA, where it helps stabilize the platform of the 30S subunit. The sequence is that of Small ribosomal subunit protein bS18 from Pelagibacter ubique (strain HTCC1062).